The primary structure comprises 525 residues: Cytochrome P450 4V2 (525 aa).

Residues 13–33 (LLLWGAASAVSLAGASLVLSL) form a helical membrane-spanning segment. Heme is bound by residues E329 and C467.

Belongs to the cytochrome P450 family. Heme serves as cofactor.

The protein localises to the endoplasmic reticulum membrane. The enzyme catalyses dodecanoate + reduced [NADPH--hemoprotein reductase] + O2 = 12-hydroxydodecanoate + oxidized [NADPH--hemoprotein reductase] + H2O + H(+). The catalysed reaction is tetradecanoate + reduced [NADPH--hemoprotein reductase] + O2 = 14-hydroxytetradecanoate + oxidized [NADPH--hemoprotein reductase] + H2O + H(+). It catalyses the reaction hexadecanoate + reduced [NADPH--hemoprotein reductase] + O2 = 16-hydroxyhexadecanoate + oxidized [NADPH--hemoprotein reductase] + H2O + H(+). It carries out the reaction (5Z,8Z,11Z,14Z,17Z)-eicosapentaenoate + reduced [NADPH--hemoprotein reductase] + O2 = 20-hydroxy-(5Z,8Z,11Z,14Z,17Z)-eicosapentaenoate + oxidized [NADPH--hemoprotein reductase] + H2O + H(+). The enzyme catalyses (4Z,7Z,10Z,13Z,16Z,19Z)-docosahexaenoate + reduced [NADPH--hemoprotein reductase] + O2 = 22-hydroxy-(4Z,7Z,10Z,13Z,16Z,19Z)-docosahexaenoate + oxidized [NADPH--hemoprotein reductase] + H2O + H(+). It functions in the pathway lipid metabolism; fatty acid metabolism. Its activity is regulated as follows. Inhibited by N-hydroxy-N'-(4-n-butyl-2-methylphenyl formamidine)(HET0016) with an IC(50) of 38 nM. A cytochrome P450 monooxygenase involved in fatty acid metabolism in the eye. Catalyzes the omega-hydroxylation of polyunsaturated fatty acids (PUFAs) docosahexaenoate (DHA) and its precursor eicosapentaenoate (EPA), and may contribute to the homeostasis of these retinal PUFAs. Omega hydroxylates saturated fatty acids such as laurate, myristate and palmitate, the catalytic efficiency decreasing in the following order: myristate &gt; laurate &gt; palmitate (C14&gt;C12&gt;C16). Mechanistically, uses molecular oxygen inserting one oxygen atom into a substrate, and reducing the second into a water molecule, with two electrons provided by NADPH via cytochrome P450 reductase (CPR; NADPH-ferrihemoprotein reductase). This Pongo abelii (Sumatran orangutan) protein is Cytochrome P450 4V2 (CYP4V2).